Consider the following 283-residue polypeptide: Bifunctional protein FolD 2 (283 aa).

Residues 165–167 (GRG), Thr-192, and Val-233 contribute to the NADP(+) site.

Belongs to the tetrahydrofolate dehydrogenase/cyclohydrolase family. In terms of assembly, homodimer.

The catalysed reaction is (6R)-5,10-methylene-5,6,7,8-tetrahydrofolate + NADP(+) = (6R)-5,10-methenyltetrahydrofolate + NADPH. It catalyses the reaction (6R)-5,10-methenyltetrahydrofolate + H2O = (6R)-10-formyltetrahydrofolate + H(+). It functions in the pathway one-carbon metabolism; tetrahydrofolate interconversion. In terms of biological role, catalyzes the oxidation of 5,10-methylenetetrahydrofolate to 5,10-methenyltetrahydrofolate and then the hydrolysis of 5,10-methenyltetrahydrofolate to 10-formyltetrahydrofolate. The polypeptide is Bifunctional protein FolD 2 (Nocardioides sp. (strain ATCC BAA-499 / JS614)).